The chain runs to 484 residues: Glutamyl-tRNA(Gln) amidotransferase subunit B, mitochondrial (484 aa).

This sequence belongs to the GatB/GatE family. GatB subfamily. In terms of assembly, subunit of the heterotrimeric GatFAB amidotransferase (AdT) complex, composed of A, B and F subunits.

The protein localises to the mitochondrion. The catalysed reaction is L-glutamyl-tRNA(Gln) + L-glutamine + ATP + H2O = L-glutaminyl-tRNA(Gln) + L-glutamate + ADP + phosphate + H(+). In terms of biological role, allows the formation of correctly charged Gln-tRNA(Gln) through the transamidation of misacylated Glu-tRNA(Gln) in the mitochondria. The reaction takes place in the presence of glutamine and ATP through an activated gamma-phospho-Glu-tRNA(Gln). This chain is Glutamyl-tRNA(Gln) amidotransferase subunit B, mitochondrial, found in Candida tropicalis (strain ATCC MYA-3404 / T1) (Yeast).